A 225-amino-acid chain; its full sequence is Ribose-5-phosphate isomerase A (225 aa).

Residues 27-30 (SGST), 80-83 (DGAD), and 93-96 (KGGG) contribute to the substrate site. Glutamate 102 (proton acceptor) is an active-site residue. Lysine 120 provides a ligand contact to substrate.

Belongs to the ribose 5-phosphate isomerase family. In terms of assembly, homodimer.

It carries out the reaction aldehydo-D-ribose 5-phosphate = D-ribulose 5-phosphate. It functions in the pathway carbohydrate degradation; pentose phosphate pathway; D-ribose 5-phosphate from D-ribulose 5-phosphate (non-oxidative stage): step 1/1. Functionally, catalyzes the reversible conversion of ribose-5-phosphate to ribulose 5-phosphate. The chain is Ribose-5-phosphate isomerase A from Korarchaeum cryptofilum (strain OPF8).